The sequence spans 284 residues: Syntaxin-like protein psy1 (284 aa).

Residues 23 to 57 (EEIDHIRDAIRQIEDNVGRIEMLHQQSLQEIDEAN) adopt a coiled-coil conformation. Positions 181–243 (LREVQERHAD…GEGTQHMDRA (63 aa)) constitute a t-SNARE coiled-coil homology domain. Residues 260–280 (ICVVIICVIVAVLCGVLIPVL) traverse the membrane as a helical; Anchor for type IV membrane protein segment.

Belongs to the syntaxin family.

The protein resides in the cell membrane. Its subcellular location is the prospore membrane. The polypeptide is Syntaxin-like protein psy1 (psy1) (Schizosaccharomyces pombe (strain 972 / ATCC 24843) (Fission yeast)).